A 145-amino-acid chain; its full sequence is 3-dehydroquinate dehydratase (145 aa).

The active-site Proton acceptor is Tyr-24. Substrate is bound by residues Asn-75, His-81, and Asp-88. His-101 serves as the catalytic Proton donor. Substrate contacts are provided by residues 102-103 (IS) and Arg-112.

Belongs to the type-II 3-dehydroquinase family. As to quaternary structure, homododecamer.

It catalyses the reaction 3-dehydroquinate = 3-dehydroshikimate + H2O. The protein operates within metabolic intermediate biosynthesis; chorismate biosynthesis; chorismate from D-erythrose 4-phosphate and phosphoenolpyruvate: step 3/7. Catalyzes a trans-dehydration via an enolate intermediate. The polypeptide is 3-dehydroquinate dehydratase (aroQ) (Corynebacterium glutamicum (strain ATCC 13032 / DSM 20300 / JCM 1318 / BCRC 11384 / CCUG 27702 / LMG 3730 / NBRC 12168 / NCIMB 10025 / NRRL B-2784 / 534)).